A 332-amino-acid chain; its full sequence is Lipoyl synthase (332 aa).

The [4Fe-4S] cluster site is built by Cys-74, Cys-79, Cys-85, Cys-100, Cys-104, Cys-107, and Ser-314. The region spanning 85–303 (CFGKGTATFM…EEKAYEMGFS (219 aa)) is the Radical SAM core domain.

It belongs to the radical SAM superfamily. Lipoyl synthase family. Requires [4Fe-4S] cluster as cofactor.

The protein localises to the cytoplasm. It carries out the reaction [[Fe-S] cluster scaffold protein carrying a second [4Fe-4S](2+) cluster] + N(6)-octanoyl-L-lysyl-[protein] + 2 oxidized [2Fe-2S]-[ferredoxin] + 2 S-adenosyl-L-methionine + 4 H(+) = [[Fe-S] cluster scaffold protein] + N(6)-[(R)-dihydrolipoyl]-L-lysyl-[protein] + 4 Fe(3+) + 2 hydrogen sulfide + 2 5'-deoxyadenosine + 2 L-methionine + 2 reduced [2Fe-2S]-[ferredoxin]. The protein operates within protein modification; protein lipoylation via endogenous pathway; protein N(6)-(lipoyl)lysine from octanoyl-[acyl-carrier-protein]: step 2/2. Catalyzes the radical-mediated insertion of two sulfur atoms into the C-6 and C-8 positions of the octanoyl moiety bound to the lipoyl domains of lipoate-dependent enzymes, thereby converting the octanoylated domains into lipoylated derivatives. The chain is Lipoyl synthase from Polaromonas naphthalenivorans (strain CJ2).